The sequence spans 449 residues: Pectate lyase L (449 aa).

Positions 1 to 26 (MFKRNDRSKNGFNALRLGVSFVLASS) are cleaved as a signal peptide. A lipid anchor (N-palmitoyl cysteine) is attached at Cys-27. A lipid anchor (S-diacylglycerol cysteine) is attached at Cys-27. PbH1 repeat units follow at residues 158–179 (GDFWLVKGLEVKGAGDNGIYIG), 180–202 (GSNNRIENVETHHNRDTGLQLGR), 213–242 (PANNLILNSYSHDNADPDNGEDADGFAAKL), 245–267 (GSGNVFDNCLAAYNVDDGWDLYS), 274–308 (IGAVTILNSVAHHNGQTSDGTSTANSDGNGFKLGG), 336–358 (PGTITLTNNTSWDNGQSNFAFDK), and 359–391 (GEHVFINNLSFEGTASDKTSGTDQDNSNVWWKN). Ca(2+) contacts are provided by Asp-236, Asp-260, Asp-261, and Asp-264. Lys-305 (proton acceptor) is an active-site residue.

The protein belongs to the polysaccharide lyase 9 family. It depends on Ca(2+) as a cofactor.

The protein resides in the secreted. The enzyme catalyses Eliminative cleavage of (1-&gt;4)-alpha-D-galacturonan to give oligosaccharides with 4-deoxy-alpha-D-galact-4-enuronosyl groups at their non-reducing ends.. With respect to regulation, activated in presence of the surfactant polysorbate 20, while inhibited in the presence of polysorbate 40, polysorbate 60, polysorbate 80, Triton X-100 and sodium dodecyl sulfate. Inhibited by the metal chelator ethylenediaminetetraacetic acid (EDTA). Inhibited by iron and cobalt ions. Its function is as follows. Presents an endo-cleaving activity on the homogalacturonan (HG) region in pectin with a preference for low- or unmethylated pectin. This Paenibacillus polymyxa (strain SC2) (Bacillus polymyxa) protein is Pectate lyase L.